The primary structure comprises 346 residues: GTP 3',8-cyclase (346 aa).

Residues 10–240 (QRSRPLRVLR…VTRIRARWPL (231 aa)) form the Radical SAM core domain. Arginine 19 contacts GTP. 2 residues coordinate [4Fe-4S] cluster: cysteine 26 and cysteine 30. Tyrosine 32 provides a ligand contact to S-adenosyl-L-methionine. Cysteine 33 is a [4Fe-4S] cluster binding site. Arginine 65 contacts GTP. Glycine 69 lines the S-adenosyl-L-methionine pocket. Threonine 104 serves as a coordination point for GTP. Residue serine 129 participates in S-adenosyl-L-methionine binding. Lysine 177 contacts GTP. An S-adenosyl-L-methionine-binding site is contributed by methionine 211. [4Fe-4S] cluster-binding residues include cysteine 274 and cysteine 277. 279–281 (RLR) lines the GTP pocket. Cysteine 291 is a [4Fe-4S] cluster binding site. Residues 326-346 (SDERQQTTGSMPHAEMAYLGG) are disordered.

The protein belongs to the radical SAM superfamily. MoaA family. Monomer and homodimer. Requires [4Fe-4S] cluster as cofactor.

It carries out the reaction GTP + AH2 + S-adenosyl-L-methionine = (8S)-3',8-cyclo-7,8-dihydroguanosine 5'-triphosphate + 5'-deoxyadenosine + L-methionine + A + H(+). It participates in cofactor biosynthesis; molybdopterin biosynthesis. Functionally, catalyzes the cyclization of GTP to (8S)-3',8-cyclo-7,8-dihydroguanosine 5'-triphosphate. The chain is GTP 3',8-cyclase from Parasynechococcus marenigrum (strain WH8102).